A 378-amino-acid chain; its full sequence is Putative zinc finger protein C09F5.3 (378 aa).

A compositionally biased stretch (basic residues) spans 1-14; that stretch reads MRKTEKMKRPHNSS. Disordered regions lie at residues 1 to 36 and 61 to 80; these read MRKT…SKSI and TLSE…NSAP. Basic and acidic residues-rich tracts occupy residues 16–26 and 62–71; these read VKQEERADDSH and LSEHVPEKKP. The C2H2-type 1 zinc-finger motif lies at 42 to 65; sequence LKCELCSTVCSSISQLQSHTLSEH. The segment at 85-107 adopts a C2H2-type 2; degenerate zinc-finger fold; sequence VACQQCEDTFEDFAQFAIHMKSH. Residues 204-226 form a C2H2-type 3; degenerate zinc finger; that stretch reads YGCALCATSYPSQLHLITHVQMS. Positions 231–250 are disordered; the sequence is TFYPPSLPIPTPPSPKSTPK. The span at 235–246 shows a compositional bias: pro residues; sequence PSLPIPTPPSPK. 4 consecutive C2H2-type zinc fingers follow at residues 254 to 277, 284 to 306, 312 to 334, and 355 to 377; these read LQCS…LRKH, DKCA…CLRH, HHCP…CAYH, and FVCP…TKIH.

The protein resides in the nucleus. This Caenorhabditis elegans protein is Putative zinc finger protein C09F5.3.